Reading from the N-terminus, the 331-residue chain is UDP-GalNAc:beta-1,3-N-acetylgalactosaminyltransferase 1 (331 aa).

Topologically, residues 1-20 (MAPALPITLPSKMSLRSLKW) are cytoplasmic. Residues 21 to 43 (SLLLLSLLSFLVMWYLSLPHYNV) form a helical; Signal-anchor for type II membrane protein membrane-spanning segment. Residues 44–331 (IERVNWMYFY…VMLRNTTCHY (288 aa)) are Lumenal-facing. N-linked (GlcNAc...) asparagine glycosylation is found at Asn72, Asn154, Asn198, Asn212, and Asn326.

This sequence belongs to the glycosyltransferase 31 family. It depends on Mg(2+) as a cofactor.

The protein resides in the golgi apparatus membrane. It catalyses the reaction a globoside Gb3Cer (d18:1(4E)) + UDP-N-acetyl-alpha-D-galactosamine = a globoside Gb4Cer (d18:1(4E)) + UDP + H(+). Its pathway is protein modification; protein glycosylation. Functionally, transfers N-acetylgalactosamine onto globotriaosylceramide. Plays a critical role in preimplantation stage embryonic development. The protein is UDP-GalNAc:beta-1,3-N-acetylgalactosaminyltransferase 1 (B3GALNT1) of Sus scrofa (Pig).